Here is a 568-residue protein sequence, read N- to C-terminus: Kelch-like protein 12 (568 aa).

In terms of domain architecture, BTB spans 33 to 100; that stretch reads CDVTLRVEQK…VYTETVHVTV (68 aa). Positions 135–236 constitute a BACK domain; it reads CLGIRDFAET…LTPRYITDVI (102 aa). 6 Kelch repeats span residues 282-329, 331-379, 380-426, 427-473, 474-520, and 522-567; these read VLLV…SLHD, IYVI…TLGD, MIYV…VASG, VIYC…LLND, HIYV…VLRG, and LYAI…ALRE.

Component of the BCR(KLHL12) E3 ubiquitin ligase complex, at least composed of CUL3 and KLHL12 and RBX1. This complex interacts with DVL3 upon activation of the Wnt signaling pathway by WNT3A. Interacts with DRD4, KLHL2 and SEC31A. Interacts with PEF1 and PDCD6/ALG-2; interaction takes place in response to cytosolic calcium increase and leads to bridge together the BCR(KLHL12) complex and SEC31 (SEC31A or SEC31B). In terms of processing, ubiquitinated by the SCF(FBXL17) complex, leading to its degradation by the proteasome: ubiquitination by the SCF(FBXL17) complex takes place when aberrant BTB domain dimers are formed.

Its subcellular location is the cytoplasmic vesicle. It localises to the COPII-coated vesicle. Its pathway is protein modification; protein ubiquitination. Its function is as follows. Substrate-specific adapter of a BCR (BTB-CUL3-RBX1) E3 ubiquitin ligase complex that acts as a negative regulator of Wnt signaling pathway and ER-Golgi transport. The BCR(KLHL12) complex is involved in ER-Golgi transport by regulating the size of COPII coats, thereby playing a key role in collagen export, which is required for embryonic stem (ES) cells division: BCR(KLHL12) acts by mediating monoubiquitination of SEC31 (SEC31A or SEC31B). The BCR(KLHL12) complex is also involved in neural crest specification: in response to cytosolic calcium increase, interacts with the heterodimer formed with PEF1 and PDCD6/ALG-2, leading to bridge together the BCR(KLHL12) complex and SEC31 (SEC31A or SEC31B), promoting monoubiquitination of SEC31 and subsequent collagen export. As part of the BCR(KLHL12) complex, also acts as a negative regulator of the Wnt signaling pathway by mediating ubiquitination and subsequent proteolysis of DVL3. The BCR(KLHL12) complex also mediates polyubiquitination of DRD4 and PEF1, without leading to degradation of these proteins. This is Kelch-like protein 12 (KLHL12) from Bos taurus (Bovine).